The following is a 210-amino-acid chain: Claudin-4 (210 aa).

The Cytoplasmic portion of the chain corresponds to 1-7; sequence MASMGLQ. The tract at residues 1-103 is interaction with EPHA2; that stretch reads MASMGLQVLG…GMLLSVVGGK (103 aa). A helical membrane pass occupies residues 8 to 28; that stretch reads VLGISLAVLGWLGIILSCALP. Topologically, residues 29–81 are extracellular; sequence MWRVTAFIGSNIVTAQTSWEGLWMNCVVQSTGQMQCKMYDSMLALPQDLQAAR. C54 and C64 form a disulfide bridge. Residues 82 to 102 traverse the membrane as a helical segment; that stretch reads ALMVISIIVGALGMLLSVVGG. At 103–116 the chain is on the cytoplasmic side; the sequence is KCTNCMEDETVKAK. Residues 117 to 137 traverse the membrane as a helical segment; that stretch reads IMITAGAVFIVASMLIMVPVS. Topologically, residues 138-160 are extracellular; that stretch reads WTAHNVIRDFYNPMVASGQKREM. Residues 161–181 traverse the membrane as a helical segment; sequence GASLYVGWAASGLLLLGGGLL. Residues 182 to 210 are Cytoplasmic-facing; the sequence is CCSCPPRSNDKPYSAKYSAARSVPASNYV. Y209 bears the Phosphotyrosine; by EPHA2 mark. Positions 209-210 are interactions with TJP1, TJP2 and TJP3; it reads YV.

Belongs to the claudin family. Can form heteropolymeric strands with other claudins. Interacts with CLDN8. Interacts with CLDN1. Directly interacts with TJP1/ZO-1, TJP2/ZO-2 and TJP3/ZO-3. Interacts with EPHA2; phosphorylates CLDN4 and may regulate tight junctions. Post-translationally, phosphorylated. Phosphorylation by EPHA2 is stimulated by EFNA1 and alters interaction with TJP1. In terms of tissue distribution, expressed primarily in lung and kidney. Present in both cortical and medullar collecting ducts (at protein level).

Its subcellular location is the cell junction. It localises to the tight junction. The protein localises to the cell membrane. It carries out the reaction chloride(in) = chloride(out). The enzyme catalyses bromide(in) = bromide(out). It catalyses the reaction iodide(out) = iodide(in). The catalysed reaction is fluoride(in) = fluoride(out). Can associate with other claudins to regulate tight junction structural and functional strand dynamics. May coassemble with CLDN8 into tight junction strands containing anion-selective channels that convey paracellular chloride permeability in renal collecting ducts. May integrate into CLDN3 strands to modulate localized tight junction barrier properties. May disrupt strand assembly of channel-forming CLDN2 and CLDN15 and inhibit cation conductance. Cannot form tight junction strands on its own. This Mus musculus (Mouse) protein is Claudin-4.